The following is a 204-amino-acid chain: uncharacterized protein (204 aa).

The interval 1 to 20 (MQNPLPEVMSPEHDKRTTTP) is disordered.

This is an uncharacterized protein from Frog virus 3 (isolate Goorha) (FV-3).